Consider the following 317-residue polypeptide: Serpentine receptor class delta-46 (317 aa).

Transmembrane regions (helical) follow at residues 9–29, 42–62, 91–111, 129–149, 185–205, 239–259, and 269–289; these read FYII…YVII, IFLC…LLQA, YVLC…TMYV, VIIL…YLTI, QIVF…MFCL, AFLP…ALIT, and FVSV…FYTV.

The protein belongs to the nematode receptor-like protein srd family.

The protein localises to the membrane. In Caenorhabditis elegans, this protein is Serpentine receptor class delta-46 (srd-46).